Reading from the N-terminus, the 428-residue chain is Major capsid protein (428 aa).

Residues 4–24 are a coiled coil; it reads IEELRRQRAGINEQIQALATI.

This sequence belongs to the HK97 phage major capsid protein family. Post-translationally, the scaffolding domain delta is cleaved by the viral protease and lost after assembly.

Its subcellular location is the virion. Its function is as follows. Major capsid protein that assembles to form an icosahedral capsid. This Klebsiella oxytoca (Bacteriophage phiKO2) protein is Major capsid protein.